The sequence spans 274 residues: Mitochondrial outer membrane protein porin 3 (274 aa).

A Phosphoserine modification is found at S76.

The protein belongs to the eukaryotic mitochondrial porin (TC 1.B.8.1) family. Interacts with KIN14F/KP1. Interacts with FBA6 and GAPC1. In terms of tissue distribution, expressed in leaf tips, anthers and stigma.

It localises to the cell membrane. It is found in the mitochondrion outer membrane. Its function is as follows. Forms a channel through the mitochondrial outer membrane that allows diffusion of small hydrophilic molecules. The channel adopts an open conformation at low or zero membrane potential and a closed conformation at potentials above 30-40 mV. The open state has a weak anion selectivity whereas the closed state is cation-selective. The chain is Mitochondrial outer membrane protein porin 3 (VDAC3) from Arabidopsis thaliana (Mouse-ear cress).